The chain runs to 210 residues: CASP-like protein 3A1 (210 aa).

The Cytoplasmic portion of the chain corresponds to 1-44 (MNGLKTPPEIGIQLPEAKVAAETGTMSGPLVPPRSDRSVRRGTD). A helical membrane pass occupies residues 45 to 65 (VAHVVLRFVCLLTSVIALSLM). Residues 66-94 (ATAKEAASISIYGFLLPVSSKWSFSDSFE) are Extracellular-facing. A helical membrane pass occupies residues 95–115 (YLVGVSAAVAAHALLQLIISV). Residues 116-130 (SRLLRKSPVIPSRNH) are Cytoplasmic-facing. Residues 131–151 (AWLIFAGDQAFAYAMLSAGSA) traverse the membrane as a helical segment. Topologically, residues 152-185 (ASGVTNLNRTGIRHSPLPNFCKPLRSFCDHVAAS) are extracellular. Asn-159 carries an N-linked (GlcNAc...) asparagine glycan. Residues 186–206 (IAFTFFSCFLLATSAILDVIW) form a helical membrane-spanning segment. The Cytoplasmic segment spans residues 207-210 (LSKY).

It belongs to the Casparian strip membrane proteins (CASP) family. As to quaternary structure, homodimer and heterodimers.

Its subcellular location is the cell membrane. This Vitis vinifera (Grape) protein is CASP-like protein 3A1.